We begin with the raw amino-acid sequence, 595 residues long: Actin-histidine N-methyltransferase (595 aa).

The interval 1 to 22 (MGKKSRVKTQKSGTGATATVSP) is disordered. Polar residues predominate over residues 10 to 20 (QKSGTGATATV). S-adenosyl-L-methionine-binding positions include R75, 104–106 (EGF), R254, 275–279 (DMCNH), and 325–327 (SGF). Positions 94-314 (EGFEMVNFKE…AGEQIYIFYG (221 aa)) constitute an SET domain. S513 carries the phosphoserine modification. The span at 549–572 (ENGLVNGENSVPNGTRSENENLNQ) shows a compositional bias: polar residues. Positions 549-595 (ENGLVNGENSVPNGTRSENENLNQEESKRAVEDAKGSSSDNTAEVKE) are disordered. The span at 573 to 583 (EESKRAVEDAK) shows a compositional bias: basic and acidic residues. The segment covering 584 to 595 (GSSSDNTAEVKE) has biased composition (polar residues).

The protein belongs to the class V-like SAM-binding methyltransferase superfamily. SETD3 actin-histidine methyltransferase family. In terms of assembly, interacts with MYOD1. In terms of processing, phosphorylated by GSK3B, which is required for recognition by the SCF(FBXW7) complex and subsequent degradation. Ubiquitinated by the SCF(FBXW7) complex following phosphorylation by GSK3B, leading to its degradation by the proteasome.

It localises to the cytoplasm. It is found in the nucleus. The catalysed reaction is L-histidyl-[protein] + S-adenosyl-L-methionine = N(tele)-methyl-L-histidyl-[protein] + S-adenosyl-L-homocysteine + H(+). In terms of biological role, protein-histidine N-methyltransferase that specifically mediates 3-methylhistidine (tele-methylhistidine) methylation of actin at 'His-73'. Histidine methylation of actin is required for smooth muscle contraction of the laboring uterus during delivery. Does not have protein-lysine N-methyltransferase activity and probably only catalyzes histidine methylation of actin. The chain is Actin-histidine N-methyltransferase from Papio anubis (Olive baboon).